A 710-amino-acid polypeptide reads, in one-letter code: Elongation factor G (710 aa).

Residues 8–290 (SQYRNIGISA…AIVEYLPSPM (283 aa)) form the tr-type G domain. Residues 17–24 (AHIDAGKT), 88–92 (DTPGH), and 142–145 (NKMD) contribute to the GTP site.

The protein belongs to the TRAFAC class translation factor GTPase superfamily. Classic translation factor GTPase family. EF-G/EF-2 subfamily.

The protein localises to the cytoplasm. Catalyzes the GTP-dependent ribosomal translocation step during translation elongation. During this step, the ribosome changes from the pre-translocational (PRE) to the post-translocational (POST) state as the newly formed A-site-bound peptidyl-tRNA and P-site-bound deacylated tRNA move to the P and E sites, respectively. Catalyzes the coordinated movement of the two tRNA molecules, the mRNA and conformational changes in the ribosome. This is Elongation factor G from Buchnera aphidicola subsp. Baizongia pistaciae (strain Bp).